Here is a 78-residue protein sequence, read N- to C-terminus: Small venom protein 2 (78 aa).

A signal peptide spans 1 to 19; the sequence is MKFIVLLGALLALLVAVSA. A propeptide spanning residues 20 to 42 is cleaved from the precursor; sequence DRIAREAPEMESVDEAVLTRQAR.

Expressed by the venom gland.

The protein localises to the secreted. The polypeptide is Small venom protein 2 (Pimpla hypochondriaca (Parasitoid wasp)).